The primary structure comprises 100 residues: Small ribosomal subunit protein uS14c (100 aa).

It belongs to the universal ribosomal protein uS14 family. In terms of assembly, part of the 30S ribosomal subunit.

It is found in the plastid. The protein localises to the chloroplast. Functionally, binds 16S rRNA, required for the assembly of 30S particles. This Cicer arietinum (Chickpea) protein is Small ribosomal subunit protein uS14c.